The sequence spans 1701 residues: Rho guanine nucleotide exchange factor TIAM2 (1701 aa).

Disordered regions lie at residues 1 to 21, 201 to 250, 265 to 293, and 389 to 417; these read MGNS…NTIT, SPTL…SSWY, GSFL…FNQS, and SLSR…DGLN. The N-myristoyl glycine moiety is linked to residue G2. Positions 238–248 are enriched in low complexity; that stretch reads SKGSSLSSESS. Positions 397–413 are enriched in basic and acidic residues; it reads LQEPRSKEGSDYFDSRS. The PH 1 domain occupies 506–620; that stretch reads VVRKAGWLFF…WVTAVHSACA (115 aa). The stretch at 628–695 forms a coiled coil; it reads GKEDTLRLLK…KFHMDLFRMR (68 aa). The RBD domain maps to 810 to 881; it reads IQTYVHFQDN…YMQQQVYDEI (72 aa). The PDZ domain occupies 890 to 976; the sequence is DVQLTKTGSV…GLTLIARPPD (87 aa). Residues 1070 to 1092 are disordered; the sequence is DSQANGMEGPRENQDPPPRSLAR. Positions 1099–1293 constitute a DH domain; sequence RLRKVIQELV…EKVASHINEM (195 aa). The 132-residue stretch at 1347-1478 folds into the PH 2 domain; it reads DLELTVFVFK…EKTCKDRLVP (132 aa). Disordered regions lie at residues 1500-1556 and 1568-1628; these read NSSS…GLAD and LSDE…PKLV. A compositionally biased stretch (low complexity) spans 1513 to 1527; it reads GTLLDSDEGSLSSGT. Position 1583 is a phosphoserine (S1583). The span at 1596–1607 shows a compositional bias: basic and acidic residues; the sequence is RISEDPDVHPEA. Position 1648 is a phosphothreonine (T1648).

Belongs to the TIAM family. In terms of assembly, interacts with MAP1A, MAP1B, PARP1 and YWHAE. Interacts with CD44, PARD3 and MAPK8IP2. Post-translationally, phosphorylated on serine and threonine residues. Phosphorylated on Thr-1648 by Rho-kinase. Its phosphorylation by Rho-kinase inhibits its guanine nucleotide exchange activity, its interaction with MAP1A, MAP1B, PARP1 and YWHAE and reduces its ability to promote neurite growth. Expressed in the occipital, frontal and temporal lobes, cerebellum, putamen and testis.

It localises to the cytoplasm. It is found in the cell projection. Its subcellular location is the lamellipodium. The protein resides in the filopodium. The protein localises to the growth cone. It localises to the neuron projection. It is found in the perikaryon. In terms of biological role, modulates the activity of RHO-like proteins and connects extracellular signals to cytoskeletal activities. Acts as a GDP-dissociation stimulator protein that stimulates the GDP-GTP exchange activity of RHO-like GTPases and activates them. Mediates extracellular laminin signals to activate Rac1, contributing to neurite growth. Involved in lamellipodial formation and advancement of the growth cone of embryonic hippocampal neurons. Promotes migration of neurons in the cerebral cortex. When overexpressed, induces membrane ruffling accompanied by the accumulation of actin filaments along the altered plasma membrane. Activates specifically RAC1, but not CDC42 and RHOA. This is Rho guanine nucleotide exchange factor TIAM2 (TIAM2) from Homo sapiens (Human).